We begin with the raw amino-acid sequence, 477 residues long: uncharacterized protein (477 aa).

This is an uncharacterized protein from Aquifex aeolicus (strain VF5).